The primary structure comprises 332 residues: NADH-quinone oxidoreductase subunit H (332 aa).

The next 9 helical transmembrane spans lie at 4-24, 44-64, 78-98, 120-140, 165-185, 194-214, 255-275, 279-299, and 312-332; these read FAFFALEALIKCIIIIAIFAS, IGPDMVGPFGLIQLVADMIKL, FIFAIAPLISAICAFVSLAAI, VALLFVIGTSGLCFYAVFLGG, VGALALIAIVMLVGSFSLVDI, FSWLIFKQPLAFVLFIIALFI, IAGAILVTLLFLGGFNGFWII, IMMIVKSSFIFFWYFWARAAF, and YLILIPLAVVNLLITALAVLL.

Belongs to the complex I subunit 1 family. NDH-1 is composed of 14 different subunits. Subunits NuoA, H, J, K, L, M, N constitute the membrane sector of the complex.

The protein localises to the cell inner membrane. The catalysed reaction is a quinone + NADH + 5 H(+)(in) = a quinol + NAD(+) + 4 H(+)(out). In terms of biological role, NDH-1 shuttles electrons from NADH, via FMN and iron-sulfur (Fe-S) centers, to quinones in the respiratory chain. The immediate electron acceptor for the enzyme in this species is believed to be ubiquinone. Couples the redox reaction to proton translocation (for every two electrons transferred, four hydrogen ions are translocated across the cytoplasmic membrane), and thus conserves the redox energy in a proton gradient. This subunit may bind ubiquinone. This Campylobacter jejuni subsp. doylei (strain ATCC BAA-1458 / RM4099 / 269.97) protein is NADH-quinone oxidoreductase subunit H.